The sequence spans 82 residues: Leucinostatins biosynthesis cluster protein M (82 aa).

Positions 34–82 (ARNETHDPSGPRAPVSSMRLGPRSRPYHHGTARLRGSPNCSRDSSSAAT) are disordered. A compositionally biased stretch (polar residues) spans 71 to 82 (PNCSRDSSSAAT).

In terms of biological role, part of the gene cluster that mediates the biosynthesis of the lipopeptide antibiotics leucinostatins that show extensive biological activities, including antimalarial, antiviral, antibacterial, antifungal, and antitumor activities, as well as phytotoxic. The function of lcsM within the leucinostatins biosynthesis has not been identified yet. In Purpureocillium lilacinum (Paecilomyces lilacinus), this protein is Leucinostatins biosynthesis cluster protein M.